A 502-amino-acid chain; its full sequence is ATP synthase subunit alpha (502 aa).

Position 169-176 (169-176 (GDRQTGKT)) interacts with ATP.

Belongs to the ATPase alpha/beta chains family. In terms of assembly, F-type ATPases have 2 components, CF(1) - the catalytic core - and CF(0) - the membrane proton channel. CF(1) has five subunits: alpha(3), beta(3), gamma(1), delta(1), epsilon(1). CF(0) has three main subunits: a(1), b(2) and c(9-12). The alpha and beta chains form an alternating ring which encloses part of the gamma chain. CF(1) is attached to CF(0) by a central stalk formed by the gamma and epsilon chains, while a peripheral stalk is formed by the delta and b chains.

The protein localises to the cell membrane. The catalysed reaction is ATP + H2O + 4 H(+)(in) = ADP + phosphate + 5 H(+)(out). In terms of biological role, produces ATP from ADP in the presence of a proton gradient across the membrane. The alpha chain is a regulatory subunit. This Staphylococcus aureus (strain Mu3 / ATCC 700698) protein is ATP synthase subunit alpha.